A 33-amino-acid chain; its full sequence is MSDIN-like toxin proprotein 2 (33 aa).

A propeptide spanning residues 1–10 is cleaved from the precursor; sequence MSDINATRLP. The segment at residues 11 to 18 is a cross-link (cyclopeptide (Ile-Pro)); that stretch reads IILAPIIP. A propeptide spanning residues 19–33 is cleaved from the precursor; sequence CINDDVNSTLTSGER.

It belongs to the MSDIN fungal toxin family. Post-translationally, processed by the macrocyclase-peptidase enzyme POPB to yield a toxic cyclic octapeptide. POPB first removes 10 residues from the N-terminus. Conformational trapping of the remaining peptide forces the enzyme to release this intermediate rather than proceed to macrocyclization. The enzyme rebinds the remaining peptide in a different conformation and catalyzes macrocyclization of the N-terminal 8 residues.

Its function is as follows. Probable toxin that belongs to the MSDIN-like toxin family responsible for a large number of food poisoning cases and deaths. The sequence is that of MSDIN-like toxin proprotein 2 from Amanita phalloides (Death cap).